The chain runs to 144 residues: Maximins 8/H7 (144 aa).

A signal peptide spans 1–18; it reads MKFKYIVAVSFLIASAYA. Residues 19–43 constitute a propeptide that is removed on maturation; the sequence is RSEENDEQSLSQRDVLEEESLREIR. Asparagine 70 is subject to Asparagine amide. Positions 74 to 123 are excised as a propeptide; it reads TAEDHEVMKRLEAVMRDLDSLDYPEEASERETRGFNQEEIANLFTKKEKR. Leucine 143 is modified (leucine amide).

This sequence belongs to the bombinin family. In terms of tissue distribution, expressed by the skin glands.

It localises to the secreted. Functionally, maximin-8 shows antimicrobial activity against bacteria and against the fungus C.albicans. It has little hemolytic activity. Maximin-H7 shows antimicrobial activity against bacteria and against the fungus C.albicans. Shows strong hemolytic activity. In Bombina maxima (Giant fire-bellied toad), this protein is Maximins 8/H7.